The sequence spans 126 residues: Basic phospholipase A2 1 (126 aa).

Residues 1 to 7 (SNRPMPL) constitute a propeptide that is removed on maturation. Cystine bridges form between C18–C78, C33–C125, C35–C51, C50–C106, C57–C99, C67–C92, and C85–C97. Ca(2+) contacts are provided by Y34, G36, and G38. Residue H54 is part of the active site. D55 is a Ca(2+) binding site. Residue D100 is part of the active site.

This sequence belongs to the phospholipase A2 family. Group I subfamily. D49 sub-subfamily. Heterodimer formed between two homologous isoforms: isoform 1 and isoform 2. Requires Ca(2+) as cofactor. In terms of tissue distribution, expressed by the venom gland.

The protein localises to the secreted. It carries out the reaction a 1,2-diacyl-sn-glycero-3-phosphocholine + H2O = a 1-acyl-sn-glycero-3-phosphocholine + a fatty acid + H(+). Its function is as follows. PLA2 catalyzes the calcium-dependent hydrolysis of the 2-acyl groups in 3-sn-phosphoglycerides. In Naja sagittifera (Andaman cobra), this protein is Basic phospholipase A2 1.